The sequence spans 383 residues: S-adenosylmethionine synthase (383 aa).

Residue His15 coordinates ATP. Asp17 lines the Mg(2+) pocket. Glu43 lines the K(+) pocket. Residues Glu56 and Gln99 each contribute to the L-methionine site. Residues 99 to 109 (QSPDINQGVDR) are flexible loop. ATP contacts are provided by residues 164–166 (DAK), 230–231 (RF), Asp239, 245–246 (RK), Ala262, and Lys266. Residue Asp239 participates in L-methionine binding. Lys270 provides a ligand contact to L-methionine.

It belongs to the AdoMet synthase family. In terms of assembly, homotetramer; dimer of dimers. It depends on Mg(2+) as a cofactor. The cofactor is K(+).

Its subcellular location is the cytoplasm. The catalysed reaction is L-methionine + ATP + H2O = S-adenosyl-L-methionine + phosphate + diphosphate. The protein operates within amino-acid biosynthesis; S-adenosyl-L-methionine biosynthesis; S-adenosyl-L-methionine from L-methionine: step 1/1. Catalyzes the formation of S-adenosylmethionine (AdoMet) from methionine and ATP. The overall synthetic reaction is composed of two sequential steps, AdoMet formation and the subsequent tripolyphosphate hydrolysis which occurs prior to release of AdoMet from the enzyme. The protein is S-adenosylmethionine synthase of Shewanella oneidensis (strain ATCC 700550 / JCM 31522 / CIP 106686 / LMG 19005 / NCIMB 14063 / MR-1).